Here is a 440-residue protein sequence, read N- to C-terminus: Cobyrinate a,c-diamide synthase (440 aa).

One can recognise a GATase cobBQ-type domain in the interval 247–428; that stretch reads RIAIAYDAAF…MHLYFPSNPR (182 aa). The active-site Nucleophile is Cys-329.

Belongs to the CobB/CbiA family. Requires Mg(2+) as cofactor.

The enzyme catalyses cob(II)yrinate + 2 L-glutamine + 2 ATP + 2 H2O = cob(II)yrinate a,c diamide + 2 L-glutamate + 2 ADP + 2 phosphate + 2 H(+). It participates in cofactor biosynthesis; adenosylcobalamin biosynthesis; cob(II)yrinate a,c-diamide from sirohydrochlorin (anaerobic route): step 10/10. Catalyzes the ATP-dependent amidation of the two carboxylate groups at positions a and c of cobyrinate, using either L-glutamine or ammonia as the nitrogen source. This chain is Cobyrinate a,c-diamide synthase, found in Picrophilus torridus (strain ATCC 700027 / DSM 9790 / JCM 10055 / NBRC 100828 / KAW 2/3).